The primary structure comprises 128 residues: Protein BEX2 (128 aa).

The tract at residues 1–44 (MMPKEEQVLKNLTMENANEENEKKDEKEQDANKGEPLALSLGAG) is disordered. Residues 20–33 (ENEKKDEKEQDANK) are compositionally biased toward basic and acidic residues. At Arg-50 the chain carries Omega-N-methylarginine. The segment at 103–128 (QLSHSLRAVSTDPPHHEHNDEFCLMP) is disordered. The span at 115 to 128 (PPHHEHNDEFCLMP) shows a compositional bias: basic and acidic residues. A his cluster region spans residues 117–121 (HHEHN). Cys-125 contacts Zn(2+).

The protein belongs to the BEX family. In terms of assembly, interacts with LMO2, possibly leading to regulate the transcriptional activity of a DNA-binding complex containing LMO2. Interacts with OMP.

Its subcellular location is the cytoplasm. The protein localises to the nucleus. In terms of biological role, regulator of mitochondrial apoptosis and G1 cell cycle. Regulates the level of PP2A regulatory subunit B and PP2A phosphatase activity. In absence of reductive stress, acts as a pseudosubstrate for the CRL2(FEM1B) complex: associates with FEM1B via zinc, thereby preventing association between FEM1B and its substrates. The chain is Protein BEX2 (BEX2) from Bos taurus (Bovine).